The following is a 122-amino-acid chain: Small ribosomal subunit protein uS13 (122 aa).

The tract at residues 99–122 (RGQRTHTNARTRKGPAKAIAGKKK) is disordered.

Belongs to the universal ribosomal protein uS13 family. Part of the 30S ribosomal subunit. Forms a loose heterodimer with protein S19. Forms two bridges to the 50S subunit in the 70S ribosome.

In terms of biological role, located at the top of the head of the 30S subunit, it contacts several helices of the 16S rRNA. In the 70S ribosome it contacts the 23S rRNA (bridge B1a) and protein L5 of the 50S subunit (bridge B1b), connecting the 2 subunits; these bridges are implicated in subunit movement. Contacts the tRNAs in the A and P-sites. This chain is Small ribosomal subunit protein uS13, found in Rhodopseudomonas palustris (strain BisA53).